We begin with the raw amino-acid sequence, 168 residues long: Envelope glycoprotein L (168 aa).

An N-terminal signal peptide occupies residues 1–22; sequence MMWKWVTLLLFVLVCGDNPVNA. The interaction with gH stretch occupies residues 25–138; the sequence is HNPFVCCHQK…TDSSGFKNNL (114 aa).

Belongs to the herpesviridae glycoprotein L family. In terms of assembly, interacts with glycoprotein H (gH); this interaction is necessary for the correct processing and cell surface expression of gH. The heterodimer gH/gL seems to interact with gB trimers during fusion.

It is found in the virion membrane. Its subcellular location is the host cell membrane. The protein resides in the host Golgi apparatus. The protein localises to the host trans-Golgi network. Its function is as follows. The heterodimer glycoprotein H-glycoprotein L is required for the fusion of viral and plasma membranes leading to virus entry into the host cell. Acts as a functional inhibitor of gH and maintains gH in an inhibited form. Upon binding to host integrins, gL dissociates from gH leading to activation of the viral fusion glycoproteins gB and gH. The chain is Envelope glycoprotein L from Connochaetes taurinus (Blue wildebeest).